Reading from the N-terminus, the 239-residue chain is Splicing factor U2AF 35 kDa subunit (239 aa).

An N-acetylalanine modification is found at Ala-2. A C3H1-type 1 zinc finger spans residues 12–40; it reads EKDKVNCSFYFKIGACRHGDRCSRLHNKP. The residue at position 39 (Lys-39) is an N6-methyllysine. Ser-61 and Ser-145 each carry phosphoserine. One can recognise an RRM domain in the interval 65-147; the sequence is LRCAVSDVEM…QPIHAELSPV (83 aa). The C3H1-type 2 zinc-finger motif lies at 149-176; the sequence is DFREACCRQYEMGECTRGGFCNFMHLKP. Arg-165 bears the Omega-N-methylarginine mark. The interval 183–239 is disordered; it reads RELYGRRRKKHRSRSRSRERRSRSRDRGRGGGGGGGGGGGRERDRRRSRDRERSGRF. Residues 188-208 are compositionally biased toward basic residues; it reads RRRKKHRSRSRSRERRSRSRD. Over residues 212–221 the composition is skewed to gly residues; sequence GGGGGGGGGG. The segment covering 222 to 239 has biased composition (basic and acidic residues); that stretch reads GRERDRRRSRDRERSGRF.

Belongs to the splicing factor SR family. Identified in the spliceosome C complex. Heterodimer with U2AF2. Interacts (via RS domain) with PHF5A (via N-terminus). Interacts with ZRANB2. Interacts with SDE2. Interacts with SF3B1. In terms of tissue distribution, expressed in primary spermatocytes and elongating spermatids (at protein level).

The protein resides in the nucleus. Its subcellular location is the nucleus speckle. In terms of biological role, plays a critical role in both constitutive and enhancer-dependent splicing by mediating protein-protein interactions and protein-RNA interactions required for accurate 3'-splice site selection. Recruits U2 snRNP to the branch point. Directly mediates interactions between U2AF2 and proteins bound to the enhancers and thus may function as a bridge between U2AF2 and the enhancer complex to recruit it to the adjacent intron. The chain is Splicing factor U2AF 35 kDa subunit (U2af1) from Mus musculus (Mouse).